The following is a 699-amino-acid chain: Putative inactive kinesin-like protein KIN-7B (699 aa).

A Kinesin motor domain is found at 1 to 170 (MRAIQKKSLC…LLFGSCAKEV (170 aa)). Positions 179-247 (VMSDKALVKH…QSRLQDLLQS (69 aa)) form a coiled coil. The interval 249–345 (GDHDLNRQVQ…VNSRHSRPSG (97 aa)) is disordered. A compositionally biased stretch (low complexity) spans 264 to 275 (RSPPSVGMPPSV). Residues 276 to 298 (SRDDSSQVSHDDSDLYKEVRCIE) show a composition bias toward basic and acidic residues. Polar residues predominate over residues 313–338 (GESSSPQDSNMNSGLHGNDSNASVNS).

This sequence belongs to the TRAFAC class myosin-kinesin ATPase superfamily. Kinesin family. KIN-7 subfamily.

The protein is Putative inactive kinesin-like protein KIN-7B of Oryza sativa subsp. japonica (Rice).